A 438-amino-acid polypeptide reads, in one-letter code: Trigger factor (438 aa).

One can recognise a PPIase FKBP-type domain in the interval 160 to 245 (DDKVTIDFVG…VKKIQQAELP (86 aa)).

It belongs to the FKBP-type PPIase family. Tig subfamily.

The protein resides in the cytoplasm. The catalysed reaction is [protein]-peptidylproline (omega=180) = [protein]-peptidylproline (omega=0). Functionally, involved in protein export. Acts as a chaperone by maintaining the newly synthesized protein in an open conformation. Functions as a peptidyl-prolyl cis-trans isomerase. This is Trigger factor from Francisella tularensis subsp. tularensis (strain FSC 198).